Reading from the N-terminus, the 244-residue chain is Small ribosomal subunit protein eS4 (244 aa).

Residues 43–106 (LPLLLVVRDV…DENYLVLFDE (64 aa)) form the S4 RNA-binding domain.

This sequence belongs to the eukaryotic ribosomal protein eS4 family.

In Methanococcus maripaludis (strain C7 / ATCC BAA-1331), this protein is Small ribosomal subunit protein eS4.